A 91-amino-acid polypeptide reads, in one-letter code: Small ribosomal subunit protein uS19 (91 aa).

Belongs to the universal ribosomal protein uS19 family.

Protein S19 forms a complex with S13 that binds strongly to the 16S ribosomal RNA. The chain is Small ribosomal subunit protein uS19 from Pseudomonas putida (strain ATCC 700007 / DSM 6899 / JCM 31910 / BCRC 17059 / LMG 24140 / F1).